A 569-amino-acid polypeptide reads, in one-letter code: Urease subunit alpha (569 aa).

The Urease domain occupies 131-569; the sequence is GGIDAHIHFI…VPMAQRYFLF (439 aa). Residues H136, H138, and K219 each coordinate Ni(2+). The residue at position 219 (K219) is an N6-carboxylysine. Position 221 (H221) interacts with substrate. Residues H248 and H274 each coordinate Ni(2+). The Proton donor role is filled by H322. D362 is a binding site for Ni(2+).

This sequence belongs to the metallo-dependent hydrolases superfamily. Urease alpha subunit family. Heterotrimer of UreA (gamma), UreB (beta) and UreC (alpha) subunits. Three heterotrimers associate to form the active enzyme. Ni cation is required as a cofactor. Carboxylation allows a single lysine to coordinate two nickel ions.

It is found in the cytoplasm. It carries out the reaction urea + 2 H2O + H(+) = hydrogencarbonate + 2 NH4(+). It participates in nitrogen metabolism; urea degradation; CO(2) and NH(3) from urea (urease route): step 1/1. In Bacillus sp. (strain TB-90), this protein is Urease subunit alpha.